A 534-amino-acid chain; its full sequence is Protein tweety homolog 2 (534 aa).

The Extracellular segment spans residues 1–44 (MQAARVDYIAPWWVVWLHSVPHVGLRLQPVNSTFSPGDESYQES). N-linked (GlcNAc...) asparagine glycosylation occurs at Asn31. The helical transmembrane segment at 45 to 65 (LLFLGLVAAVCLGLNLIFLVA) threads the bilayer. The Cytoplasmic segment spans residues 66–87 (YLVCACHCRRDDAVQTKQHHSC). A helical transmembrane segment spans residues 88–108 (CITWTAVVAGLICCAAVGVGF). Residues 109 to 213 (YGNSETNDGA…QTGYVEYYRW (105 aa)) are Extracellular-facing. Residues Glu113 and Asp116 each contribute to the Ca(2+) site. Asn129 carries N-linked (GlcNAc) asparagine glycosylation. Positions 164-166 (RGD) match the RGD motif. Thr199 carries the phosphothreonine modification. Residues 214–234 (LSYLLLFILDLVICLIACLGL) traverse the membrane as a helical segment. Over 235–240 (AKRSKC) the chain is Cytoplasmic. Residues 241-261 (LLASMLCCGALSLLLSWASLA) traverse the membrane as a helical segment. The Extracellular segment spans residues 262–388 (ADGSAAVATS…AGICYDGLQG (127 aa)). 2 cysteine pairs are disulfide-bonded: Cys274–Cys382 and Cys300–Cys367. N-linked (GlcNAc...) asparagine glycosylation occurs at Asn283. The N-linked (GlcNAc) asparagine glycan is linked to Asn352. Residues 389-409 (LLYLGLFSFLAALAFSTMICA) form a helical membrane-spanning segment. Residues 410 to 534 (GPRAWKHFTT…LRHYGNQFPA (125 aa)) are Cytoplasmic-facing. Phosphoserine is present on Ser504. The short motif at 506-509 (PPTY) is the PY-motif; mediates interaction with NEDD4L element.

This sequence belongs to the tweety family. As to quaternary structure, homodimer. Forms cis-homodimers in the presence of Ca(+2) and forms monomers and trans-dimers in the absence of Ca(2+). Interacts with NEDD4L. In terms of processing, N- Glycosylated. Contains high-mannose, hybrid and complex oligosaccharides. Ubiquitinated by NEDD4L, leading to its proteasomal degradation. Expressed at higher level in brain and testis and at lower levels in heart, ovary, spleen and peripheral blood leukocytes. Up-regulated in 13 of 16 renal cell carcinoma samples examined. Up-regulated in colon carcinoma.

The protein localises to the cell membrane. It catalyses the reaction chloride(in) = chloride(out). The catalysed reaction is L-glutamate(out) = L-glutamate(in). In terms of biological role, calcium-independent, swelling-dependent volume-regulated anion channel (VRAC-swell) which plays a pivotal role in the process of regulatory volume decrease (RVD) in the brain through the efflux of anions like chloride and organic osmolytes like glutamate. Probable large-conductance Ca(2+)-activated chloride channel. This is Protein tweety homolog 2 (TTYH2) from Homo sapiens (Human).